Here is a 281-residue protein sequence, read N- to C-terminus: 32 kDa heat shock protein (281 aa).

The span at 142 to 168 (EDDEEIDSDEEFGDSDQDEEDSDDEEI) shows a compositional bias: acidic residues. The tract at residues 142-281 (EDDEEIDSDE…NENNKKKQKN (140 aa)) is disordered. Residues 180-209 (KITEISEVPESKKEKTPEPKKVPEPKKEQV) show a composition bias toward basic and acidic residues. Residues 210–273 (KQPTQPQQKK…NNKRPQNQNE (64 aa)) show a composition bias toward low complexity.

The protein is 32 kDa heat shock protein (hspC) of Dictyostelium discoideum (Social amoeba).